A 914-amino-acid chain; its full sequence is Ubiquitin carboxyl-terminal hydrolase 20 (914 aa).

The UBP-type zinc-finger motif lies at 6–111; it reads DLCPHLDSIG…GSSSKFSEQD (106 aa). Cysteine 8, histidine 10, cysteine 30, cysteine 33, cysteine 43, cysteine 48, cysteine 53, histidine 60, histidine 64, histidine 70, cysteine 83, and cysteine 86 together coordinate Zn(2+). 3 positions are modified to phosphoserine: serine 112, serine 132, and serine 134. One can recognise a USP domain in the interval 145–685; the sequence is TGMKNLGNSC…EGYVLFYRKS (541 aa). Cysteine 154 serves as the catalytic Nucleophile. Disordered regions lie at residues 257–347 and 360–415; these read LTEA…VDED and QPAE…ASPV. Threonine 258 is subject to Phosphothreonine. The span at 259–279 shows a compositional bias: basic and acidic residues; sequence EARDSDSSDTDEKREGDRSPS. Residue serine 305 is modified to Phosphoserine. A compositionally biased stretch (basic and acidic residues) spans 316-332; that stretch reads EAGRAISEKERMKDRKF. Phosphoserine is present on serine 368. Residue threonine 377 is modified to Phosphothreonine. Serine 408 and serine 413 each carry phosphoserine. Residue histidine 643 is the Proton acceptor of the active site. 2 DUSP domains span residues 687 to 780 and 789 to 892; these read EEAM…LYVC and ALAK…RQSV.

The protein belongs to the peptidase C19 family. USP20/USP33 subfamily. In terms of assembly, interacts with VHL, leading to its ubiquitination and subsequent degradation. Interacts with CCP110. Interacts with DIO2. Interacts with HIF1A. Interacts with ADRB2. Interacts with USP18. Ubiquitinated via a VHL-dependent pathway for proteasomal degradation.

It localises to the cytoplasm. It is found in the endoplasmic reticulum. The protein resides in the perinuclear region. The protein localises to the cytoskeleton. Its subcellular location is the microtubule organizing center. It localises to the centrosome. It catalyses the reaction Thiol-dependent hydrolysis of ester, thioester, amide, peptide and isopeptide bonds formed by the C-terminal Gly of ubiquitin (a 76-residue protein attached to proteins as an intracellular targeting signal).. Functionally, deubiquitinating enzyme that plays a role in many cellular processes including autophagy, cellular antiviral response or membrane protein biogenesis. Attenuates TLR4-mediated NF-kappa-B signaling by cooperating with beta-arrestin-2/ARRB2 and inhibiting TRAF6 autoubiquitination. Promotes cellular antiviral responses by deconjugating 'Lys-33' and 'Lys-48'-linked ubiquitination of STING1 leading to its stabilization. Plays an essential role in autophagy induction by regulating the ULK1 stability through deubiquitination of ULK1. Acts as a positive regulator for NF-kappa-B activation by TNF-alpha through deubiquitinating 'Lys-48'-linked polyubiquitination of SQSTM1, leading to its increased stability. Acts as a regulator of G-protein coupled receptor (GPCR) signaling by mediating the deubiquitination beta-2 adrenergic receptor (ADRB2). Plays a central role in ADRB2 recycling and resensitization after prolonged agonist stimulation by constitutively binding ADRB2, mediating deubiquitination of ADRB2 and inhibiting lysosomal trafficking of ADRB2. Upon dissociation, it is probably transferred to the translocated beta-arrestins, possibly leading to beta-arrestins deubiquitination and disengagement from ADRB2. This suggests the existence of a dynamic exchange between the ADRB2 and beta-arrestins. Deubiquitinates DIO2, thereby regulating thyroid hormone regulation. Deubiquitinates HIF1A, leading to stabilize HIF1A and enhance HIF1A-mediated activity. Deubiquitinates MCL1, a pivotal member of the anti-apoptotic Bcl-2 protein family to regulate its stability. Within the endoplasmic reticulum, participates with USP33 in the rescue of post-translationally targeted membrane proteins that are inappropriately ubiquitinated by the cytosolic protein quality control in the cytosol. The protein is Ubiquitin carboxyl-terminal hydrolase 20 (USP20) of Homo sapiens (Human).